Here is an 85-residue protein sequence, read N- to C-terminus: Large ribosomal subunit protein bL27 (85 aa).

The segment at 1-20 is disordered; the sequence is MAHKKAGGSTRNGRDSEAKR.

It belongs to the bacterial ribosomal protein bL27 family.

In Escherichia coli O139:H28 (strain E24377A / ETEC), this protein is Large ribosomal subunit protein bL27.